We begin with the raw amino-acid sequence, 53 residues long: Non-classical export protein 1 (53 aa).

Residues 7–29 (FLLGKFSDPLLAIMVGCLSYYVY) traverse the membrane as a helical segment.

The protein belongs to the NCE101 family.

The protein resides in the membrane. Involved in a novel pathway of export of proteins that lack a cleavable signal sequence. May be part of the export machinery or may also be a substrate for non-classical export. The polypeptide is Non-classical export protein 1 (NCE101) (Saccharomyces cerevisiae (strain ATCC 204508 / S288c) (Baker's yeast)).